Consider the following 1240-residue polypeptide: Cohesin subunit SA-3 (1240 aa).

The segment covering 1-25 (MPTLWSPSTQHHGSSSGSESSPLQK) has biased composition (low complexity). A disordered region spans residues 1 to 108 (MPTLWSPSTQ…VSSGNGKNES (108 aa)). Residues 97–108 (RIVSSGNGKNES) are compositionally biased toward polar residues. The 86-residue stretch at 324–409 (FVHRYRDILP…NRFKDRMVSM (86 aa)) folds into the SCD domain. Disordered regions lie at residues 1077–1154 (AEAS…PELI) and 1213–1240 (DKMLHSPSSPSEHGLDLLDTTELNMEDF). The segment covering 1115 to 1125 (GPTTPTLTSTA) has biased composition (polar residues). Over residues 1126 to 1141 (VKRKQSLRTVGKKQKG) the composition is skewed to basic residues. Ser-1218 carries the phosphoserine modification.

It belongs to the SCC3 family. As to quaternary structure, component of the meiosis-specific cohesin complex, which also contains the SMC1 (SMC1A or SMC1B) and SMC3 heterodimer. Such complex likely contains RAD21, or the meiosis-specific related protein REC8. Interacts with CCDC79/TERB1; recruiting cohesin to telomeres to develop structural rigidity. In terms of processing, phosphorylated. As to expression, testis specific.

It localises to the nucleus. It is found in the chromosome. Its subcellular location is the centromere. Meiosis specific component of cohesin complex. The cohesin complex is required for the cohesion of sister chromatids after DNA replication. The cohesin complex apparently forms a large proteinaceous ring within which sister chromatids can be trapped. At anaphase, the complex is cleaved and dissociates from chromatin, allowing sister chromatids to segregate. The meiosis-specific cohesin complex probably replaces mitosis specific cohesin complex when it dissociates from chromatin during prophase I. The polypeptide is Cohesin subunit SA-3 (Stag3) (Mus musculus (Mouse)).